Here is a 218-residue protein sequence, read N- to C-terminus: Ras-related protein Rab-4A (218 aa).

GTP contacts are provided by G23, T24, G25, K26, S27, C28, S42, H44, and T45. S27 provides a ligand contact to Mg(2+). The Switch 1 signature appears at 44–49 (HTIGVE). Mg(2+) is bound by residues T45 and D68. A Switch 2 motif is present at residues 70–79 (AGQERFRSVT). A GTP-binding site is contributed by G71. Residue Q72 is modified to 5-glutamyl serotonin. Residues N126, K127, D129, A157, and L158 each coordinate GTP. At S190 the chain carries Phosphoserine. S204 is subject to Phosphoserine; by CDK1. Residues C216 and C218 are each lipidated (S-geranylgeranyl cysteine). Cysteine methyl ester is present on C218.

The protein belongs to the small GTPase superfamily. Rab family. Interacts with RAB11FIP1, RABEP1, ZFYVE20 and RUFY1. Interacts with SGSM1, SGSM2 and SGSM3. Interacts (membrane-bound form) with NDRG1; the interaction involves NDRG1 in vesicular recycling of E-cadherin. Interacts (in GTP-bound form) with GRIPAP1. Interacts with RABEP1 and RBSN. Does not interact with HPS4. Mg(2+) is required as a cofactor. In terms of processing, serotonylation of Gln-72 by TGM2 during activation and aggregation of platelets leads to constitutive activation of GTPase activity. Phosphorylated by CDK1 kinase during mitosis.

Its subcellular location is the membrane. It localises to the cytoplasm. It is found in the early endosome membrane. The protein localises to the recycling endosome membrane. It carries out the reaction GTP + H2O = GDP + phosphate + H(+). Regulated by guanine nucleotide exchange factors (GEFs) which promote the exchange of bound GDP for free GTP. Regulated by GTPase activating proteins (GAPs) which increase the GTP hydrolysis activity. Inhibited by GDP dissociation inhibitors (GDIs). The small GTPases Rab are key regulators of intracellular membrane trafficking, from the formation of transport vesicles to their fusion with membranes. Rabs cycle between an inactive GDP-bound form and an active GTP-bound form that is able to recruit to membranes different sets of downstream effectors directly responsible for vesicle formation, movement, tethering and fusion. RAB4A is involved in protein transport. Also plays a role in vesicular traffic. Mediates VEGFR2 endosomal trafficking to enhance VEGFR2 signaling. Acts as a regulator of platelet alpha-granule release during activation and aggregation of platelets. This Bos taurus (Bovine) protein is Ras-related protein Rab-4A (RAB4A).